A 679-amino-acid polypeptide reads, in one-letter code: MGLFNAHAVAQQRADRIATLLQSFADGQLDTAVGEAPAPGYERLYDSLRALQRQLREQRAELQQVESLEAGLAEMSRQHEAGWIDQTIPAERLEGRAARIAKGVNELVAAHIAVKMKVVSVVTAYGQGNFEPLMDRLPGKKAQITEAIDGVRERLRGAAEATSAQLATAAYNARIKSALDNVSANVMIADNDLNIIYMNRTVSEMLGRAEADIRKQLPNFDAGRLMGANIDVFHKNPAHQRHLLANLTGVHKAELNLGGRRFSLDVVPVFNDANERLGSAVQWTDRTEEHRAEQEVSQLVQAAAAGDFSKRVEEAGKEGFFLRLAKDLNSLVDTADRGLRDVSRMLGALAQGDLTQRIEADYQGTFGQLKDFSNDTAQSLSRMLGQIREAADTINTAASEIASGNAELSARTEQQASSLEETASSMEELTSTVKLNAENARQANSLAANASEVATQGGTVVQKVVSTMSSINESARKIADIIGVIDGIAFQTNILALNAAVEAARAGEQGRGFAVVAGEVRTLAQRSAAAAKEIKTLISDSVDKVENGNTLVAQAGQTMSDIVVAIRRVTDIMSEIAAASAEQSTGIEEVNSAVSQMDDMTQQNAALVEEAAAAAEAMQEQAGLLNQSVAVFRLDTPPSVVQLASARPSAPRPSAPAPLARSGMARASKARKEDGWEEF.

Divergent domain HAMP stretches follow at residues alanine 8 to arginine 56, glutamine 63 to isoleucine 112, and histidine 111 to arginine 156. Residues tyrosine 171 to isoleucine 213 enclose the PAS domain. Position 234 (histidine 234) interacts with heme. The DxT. Important for signal propagation signature appears at aspartate 285–threonine 287. A divergent domain HAMP 4 region spans residues glutamate 289–valine 332. The HAMP 5 domain occupies aspartate 333–glycine 385. Positions alanine 390 to glutamine 619 constitute a Methyl-accepting transducer domain. Disordered stretches follow at residues asparagine 405–serine 425 and alanine 644–phenylalanine 679. The span at arginine 411–serine 425 shows a compositional bias: polar residues. Positions alanine 670–phenylalanine 679 are enriched in basic and acidic residues. The GWEEF pentapeptide. Important for methylation by CheR2 motif lies at glycine 675–phenylalanine 679.

This sequence belongs to the methyl-accepting chemotaxis (MCP) protein family. In terms of assembly, homodimer. The PAS domains form dimers in the presence and absence of oxygen. Interacts with the methyltransferase CheR2 via the C-terminal McpB pentapeptide GWEEF. Interacts with the methylesterase/gutaminase CheB2, which also binds to the GWEEF pentapeptide. Methylated by CheR2, but not by CheR1, CheR3 or WspC. Demethylated by CheB2. In vitro, can be methylated by E.coli CheR.

The protein resides in the cytoplasm. Functionally, chemoreceptor that plays a critical role in the virulence and pathogenesis of P.aeruginosa in a variety of hosts. Probably acts through oxygen sensing. Uses a heme-based sensor. Could be involved in chemotaxis. When expressed in E.coli, is able to sense and mediate repellent responses to oxygen, carbon monoxide and nitric oxide. This Pseudomonas aeruginosa (strain ATCC 15692 / DSM 22644 / CIP 104116 / JCM 14847 / LMG 12228 / 1C / PRS 101 / PAO1) protein is Methyl-accepting chemotaxis protein McpB.